Reading from the N-terminus, the 466-residue chain is ATP synthase subunit beta (466 aa).

153–160 (GGAGVGKT) contacts ATP.

This sequence belongs to the ATPase alpha/beta chains family. F-type ATPases have 2 components, CF(1) - the catalytic core - and CF(0) - the membrane proton channel. CF(1) has five subunits: alpha(3), beta(3), gamma(1), delta(1), epsilon(1). CF(0) has three main subunits: a(1), b(2) and c(9-12). The alpha and beta chains form an alternating ring which encloses part of the gamma chain. CF(1) is attached to CF(0) by a central stalk formed by the gamma and epsilon chains, while a peripheral stalk is formed by the delta and b chains.

It is found in the cell membrane. The catalysed reaction is ATP + H2O + 4 H(+)(in) = ADP + phosphate + 5 H(+)(out). In terms of biological role, produces ATP from ADP in the presence of a proton gradient across the membrane. The catalytic sites are hosted primarily by the beta subunits. This chain is ATP synthase subunit beta, found in Leuconostoc mesenteroides subsp. mesenteroides (strain ATCC 8293 / DSM 20343 / BCRC 11652 / CCM 1803 / JCM 6124 / NCDO 523 / NBRC 100496 / NCIMB 8023 / NCTC 12954 / NRRL B-1118 / 37Y).